The primary structure comprises 485 residues: DNA polymerase subunit gamma-2 (485 aa).

The segment at 28-67 (RQPEQLSKGTGSFVGPVRSQAELPRNEPREAPESGGEGSE) is disordered.

In terms of assembly, heterotrimer composed of a catalytic subunit and a homodimer of accessory subunits (POLG:POLG2).

It localises to the mitochondrion. It is found in the mitochondrion matrix. The protein localises to the mitochondrion nucleoid. In terms of biological role, accessory subunit of DNA polymerase gamma solely responsible for replication of mitochondrial DNA (mtDNA). Acts as an allosteric regulator of the holoenzyme activities. Enhances the polymerase activity and the processivity of POLG by increasing its interactions with the DNA template. Suppresses POLG exonucleolytic proofreading especially toward homopolymeric templates bearing mismatched termini. Binds to single-stranded DNA. The chain is DNA polymerase subunit gamma-2 (POLG2) from Bos taurus (Bovine).